We begin with the raw amino-acid sequence, 273 residues long: MDLKWDDFFNDYEWLIVFLKGMVKPAAALVVVLLAVILSYSQNLSLEGEMIYSVSRSFLQLSVIGFVLQFIFNQENSGWIILAYLFMVSVAGYTAGQRARHVPRGKYVAGLSILAGTSITMFLLVLLNVFPFTPRYMIPIAGMLVGNAMTVTGVTMKQLRDDIKMQLNLVETALALGATPRQATLQQVKRALVISLSPVLDSCKTVGLISLPGAMTGMIMGGASPLEAIQLQIVVMNMMVGAATVSSITSTYLCWPSFFTKAYQLQTHVFSSD.

A run of 7 helical transmembrane segments spans residues 14–34 (WLIV…VVLL), 51–71 (IYSV…LQFI), 76–96 (NSGW…YTAG), 107–127 (YVAG…LVLL), 136–156 (YMIP…GVTM), 191–213 (ALVI…SLPG), and 228–248 (AIQL…VSSI).

It belongs to the UPF0014 family. In terms of tissue distribution, expressed in roots, leaves, stems, and flowers.

It is found in the cell membrane. Its function is as follows. Required for aluminum (Al) resistance/tolerance, probably by translocating Al from sensitive tissues such as growing roots to tissues less sensisitive to the toxic effects of Al. This is Protein ALUMINUM SENSITIVE 3 (ALS3) from Arabidopsis thaliana (Mouse-ear cress).